The primary structure comprises 163 residues: UPF0523 protein B (163 aa).

It belongs to the UPF0523 family.

This Dictyostelium discoideum (Social amoeba) protein is UPF0523 protein B.